The primary structure comprises 427 residues: MTESCTVFSFSGPKGIPDYFPPDSAQFVAVRDGLLTAARRAGYGDIELPVFEDTALFARGVGESTDVVAKEMYTFADRGDRSVTLRPEGTAGVVRAVIEHGLDRGALPVKLCYAGPFFRYERPQAGRCRQLQQVGVEAIGVDDPALDAEVITIADAGFRSLGLDGFQLEITSLGDGTCRPQYRKLLQEFLLQLDLDEDTRRRAELNPLRVLDDKRPQVQAMTAAAPVLLDHLSDGAKQHFDTVLAHLDALRVPYVINPRMVRGLDYYTKTTFEFVHPGLGAQSGIGGGGRYDGLMRQLGGQDLSGIGFGLGVDRTLLALHAEGKTVGETTRCDVFGVSLGEAAKLKVAMLAGQLRAAGVRVDLIYGDRGIRGAMRAAGRSGARIALIVDDCAIKADGVGVRDLATGEQISVAVDSVVAEVISRIAPS.

Belongs to the class-II aminoacyl-tRNA synthetase family. Homodimer.

It is found in the cytoplasm. The enzyme catalyses tRNA(His) + L-histidine + ATP = L-histidyl-tRNA(His) + AMP + diphosphate + H(+). This Mycobacterium leprae (strain TN) protein is Histidine--tRNA ligase (hisS).